A 347-amino-acid polypeptide reads, in one-letter code: Protein RecA (347 aa).

Residue glycine 64–threonine 71 participates in ATP binding.

The protein belongs to the RecA family.

The protein resides in the cytoplasm. Its function is as follows. Can catalyze the hydrolysis of ATP in the presence of single-stranded DNA, the ATP-dependent uptake of single-stranded DNA by duplex DNA, and the ATP-dependent hybridization of homologous single-stranded DNAs. It interacts with LexA causing its activation and leading to its autocatalytic cleavage. In Bartonella quintana (strain Toulouse) (Rochalimaea quintana), this protein is Protein RecA.